The chain runs to 244 residues: Phosphoadenosine 5'-phosphosulfate reductase (244 aa).

The active-site Nucleophile; cysteine thiosulfonate intermediate is the C239.

The protein belongs to the PAPS reductase family. CysH subfamily.

Its subcellular location is the cytoplasm. The catalysed reaction is [thioredoxin]-disulfide + sulfite + adenosine 3',5'-bisphosphate + 2 H(+) = [thioredoxin]-dithiol + 3'-phosphoadenylyl sulfate. It functions in the pathway sulfur metabolism; hydrogen sulfide biosynthesis; sulfite from sulfate: step 3/3. Its function is as follows. Catalyzes the formation of sulfite from phosphoadenosine 5'-phosphosulfate (PAPS) using thioredoxin as an electron donor. This Salmonella schwarzengrund (strain CVM19633) protein is Phosphoadenosine 5'-phosphosulfate reductase.